Consider the following 863-residue polypeptide: Leucine--tRNA ligase (863 aa).

Residues Pro-42–His-52 carry the 'HIGH' region motif. The 'KMSKS' region motif lies at Lys-622 to Ser-626. Lys-625 is a binding site for ATP.

The protein belongs to the class-I aminoacyl-tRNA synthetase family.

The protein localises to the cytoplasm. The catalysed reaction is tRNA(Leu) + L-leucine + ATP = L-leucyl-tRNA(Leu) + AMP + diphosphate. This Shewanella frigidimarina (strain NCIMB 400) protein is Leucine--tRNA ligase.